A 210-amino-acid polypeptide reads, in one-letter code: Uridine kinase (210 aa).

12–19 serves as a coordination point for ATP; it reads GGSGGGKT.

The protein belongs to the uridine kinase family.

The protein resides in the cytoplasm. It carries out the reaction uridine + ATP = UMP + ADP + H(+). The catalysed reaction is cytidine + ATP = CMP + ADP + H(+). It functions in the pathway pyrimidine metabolism; CTP biosynthesis via salvage pathway; CTP from cytidine: step 1/3. The protein operates within pyrimidine metabolism; UMP biosynthesis via salvage pathway; UMP from uridine: step 1/1. In Streptococcus gordonii (strain Challis / ATCC 35105 / BCRC 15272 / CH1 / DL1 / V288), this protein is Uridine kinase.